The following is a 95-amino-acid chain: Small ribosomal subunit protein bS6 (95 aa).

The protein belongs to the bacterial ribosomal protein bS6 family.

Binds together with bS18 to 16S ribosomal RNA. The protein is Small ribosomal subunit protein bS6 of Corynebacterium kroppenstedtii (strain DSM 44385 / JCM 11950 / CIP 105744 / CCUG 35717).